The chain runs to 166 residues: NAD(P)H-quinone oxidoreductase subunit I, chloroplastic (166 aa).

4Fe-4S ferredoxin-type domains lie at 55–84 and 95–124; these read GRIH…VDWQ and VNYS…MTEE. [4Fe-4S] cluster contacts are provided by C64, C67, C70, C74, C104, C107, C110, and C114.

It belongs to the complex I 23 kDa subunit family. NDH is composed of at least 16 different subunits, 5 of which are encoded in the nucleus. Requires [4Fe-4S] cluster as cofactor.

It is found in the plastid. The protein resides in the chloroplast thylakoid membrane. It catalyses the reaction a plastoquinone + NADH + (n+1) H(+)(in) = a plastoquinol + NAD(+) + n H(+)(out). It carries out the reaction a plastoquinone + NADPH + (n+1) H(+)(in) = a plastoquinol + NADP(+) + n H(+)(out). Its function is as follows. NDH shuttles electrons from NAD(P)H:plastoquinone, via FMN and iron-sulfur (Fe-S) centers, to quinones in the photosynthetic chain and possibly in a chloroplast respiratory chain. The immediate electron acceptor for the enzyme in this species is believed to be plastoquinone. Couples the redox reaction to proton translocation, and thus conserves the redox energy in a proton gradient. In Coreopsis petrophiloides (Tickseed), this protein is NAD(P)H-quinone oxidoreductase subunit I, chloroplastic.